The primary structure comprises 1251 residues: Immunoglobulin-like and fibronectin type III domain-containing protein 1 (1251 aa).

In terms of domain architecture, Ig-like 1 spans 29–119; the sequence is PDFEQKPVTS…GEAACSVRLT (91 aa). Positions 61 to 81 are disordered; that stretch reads RWQNSKGDLSDSSKYKISSSP. Residues 188–221 adopt a coiled-coil conformation; it reads IVDYRGMLRRLQEMKKEQEDKMAQYINTISSLRH. The Ig-like 2 domain maps to 309–398; that stretch reads PRVVVPLAET…SSAWLVVEAG (90 aa). A compositionally biased stretch (basic and acidic residues) spans 403–433; that stretch reads LQSTSADHKLQSRRSGKDGRLDIYGERRDAT. The segment at 403–454 is disordered; that stretch reads LQSTSADHKLQSRRSGKDGRLDIYGERRDATRSSTSRYKPGTGSFSKDAQGP. Over residues 434–449 the composition is skewed to polar residues; sequence RSSTSRYKPGTGSFSK. An Ig-like 3 domain is found at 454–539; that stretch reads PMGHFSQGLA…GDQQSEATLT (86 aa). Fibronectin type-III domains are found at residues 646–741, 746–845, and 847–942; these read PPQG…VAPE, APSA…MRPP, and LVRN…AMPV. The Ig-like 4 domain occupies 946-1030; it reads PKFLVDSSTK…LRTLQGKEVA (85 aa). The 95-residue stretch at 1043-1137 folds into the Fibronectin type-III 4 domain; that stretch reads APGPIHLQEN…TSQPWCIPRQ (95 aa). An Ig-like 5 domain is found at 1151-1245; sequence PDLSQKPRFL…GQAVSTATLI (95 aa).

As to quaternary structure, interacts with FLNC. Interacts with KY. Expressed in skeletal muscle.

It is found in the nucleus. Its subcellular location is the cytoplasm. The protein localises to the myofibril. It localises to the sarcomere. The protein resides in the z line. The sequence is that of Immunoglobulin-like and fibronectin type III domain-containing protein 1 (IGFN1) from Homo sapiens (Human).